Reading from the N-terminus, the 317-residue chain is Probable deoxyhypusine synthase 1 (317 aa).

Lysine 285 functions as the Nucleophile in the catalytic mechanism.

It belongs to the deoxyhypusine synthase family. It depends on NAD(+) as a cofactor.

It carries out the reaction [eIF5A protein]-L-lysine + spermidine = [eIF5A protein]-deoxyhypusine + propane-1,3-diamine. The protein operates within protein modification; eIF5A hypusination. Its function is as follows. Catalyzes the NAD-dependent oxidative cleavage of spermidine and the subsequent transfer of the butylamine moiety of spermidine to the epsilon-amino group of a specific lysine residue of the eIF-5A precursor protein to form the intermediate deoxyhypusine residue. This is Probable deoxyhypusine synthase 1 (dys1) from Methanosarcina mazei (strain ATCC BAA-159 / DSM 3647 / Goe1 / Go1 / JCM 11833 / OCM 88) (Methanosarcina frisia).